A 772-amino-acid polypeptide reads, in one-letter code: Polyribonucleotide nucleotidyltransferase (772 aa).

Residues Asp-488 and Asp-494 each contribute to the Mg(2+) site. Residues 555–614 (PRLTTLKINPEKIRDVIGKGGAVIRGLQEETGTTINIDEDGTITIASTDPEKAEFAKKRI) enclose the KH domain. The S1 motif domain occupies 624–692 (GKVYEGPVTK…EKGRVKLSMK (69 aa)). Residues 690-772 (SMKALTERPA…QPYAPRDSQE (83 aa)) are disordered. Basic and acidic residues predominate over residues 703–740 (YSERPPREDRGDRGDRGGERRERSDRGDRGGDRGERAP). Positions 743 to 757 (NSEQQQQPRSNEQQP) are enriched in low complexity.

The protein belongs to the polyribonucleotide nucleotidyltransferase family. Mg(2+) serves as cofactor.

It localises to the cytoplasm. It catalyses the reaction RNA(n+1) + phosphate = RNA(n) + a ribonucleoside 5'-diphosphate. Its function is as follows. Involved in mRNA degradation. Catalyzes the phosphorolysis of single-stranded polyribonucleotides processively in the 3'- to 5'-direction. The protein is Polyribonucleotide nucleotidyltransferase of Variovorax paradoxus (strain S110).